We begin with the raw amino-acid sequence, 216 residues long: Sperm microtubule inner protein 8 (216 aa).

Microtubule inner protein component of sperm flagellar doublet microtubules. Expressed in testis.

It is found in the cytoplasm. The protein localises to the cytoskeleton. Its subcellular location is the flagellum axoneme. Functionally, microtubule inner protein (MIP) part of the dynein-decorated doublet microtubules (DMTs) in flagellum axoneme. May serve to reinforce and thus stabilize the microtubule structure in the sperm flagella. In Mus musculus (Mouse), this protein is Sperm microtubule inner protein 8 (Spmip8).